The sequence spans 441 residues: Polycomb protein EED (441 aa).

The tract at residues Met1 to Lys72 is disordered. Ser2 carries the N-acetylserine modification. A phosphoserine mark is found at Ser2 and Ser34. The segment covering Glu45–Asn61 has biased composition (polar residues). Thr55 bears the Phosphothreonine mark. Lys66 is subject to N6,N6,N6-trimethyllysine; alternate. Position 66 is an N6,N6-dimethyllysine; alternate (Lys66). Lys66 carries the N6-methyllysine; alternate modification. Positions Ser81 to Arg441 are interaction with EZH2. 4 WD repeats span residues Asp91–Leu134, Asp142–His185, Gly188–Ile228, and Gly234–Lys275. Required for interaction with the matrix protein MA of HIV-1 stretches follow at residues Thr149–Asp303 and Thr301–Arg441. Lys197, Lys268, and Lys284 each carry N6,N6,N6-trimethyllysine; alternate. An N6,N6-dimethyllysine; alternate mark is found at Lys197, Lys268, and Lys284. An N6-methyllysine; alternate mark is found at Lys197, Lys268, and Lys284. 3 WD repeats span residues Ile304 to Asp341, Ser359 to Ala399, and Lys408 to Arg441.

It belongs to the WD repeat ESC family. As to quaternary structure, component of the PRC2/EED-EZH2 complex, which includes EED, EZH2, SUZ12, RBBP4 and RBBP7 and possibly AEBP2. The minimum components required for methyltransferase activity of the PRC2/EED-EZH2 complex are EED, EZH2 and SUZ12. Component of the PRC2/EED-EZH1 complex, which includes EED, EZH1, SUZ12, RBBP4 and AEBP2. The PRC2 complex may also interact with DNMT1, DNMT3A, DNMT3B and PHF1 via the EZH2 subunit and with SIRT1 via the SUZ12 subunit. Interacts with HDAC, HDAC2, histone H1 and YY1. May interact with ITGA4, ITGAE and ITGB7. Interacts with CDYL. Interacts with BMAL1. Interacts with KMT2A/MLL1. In terms of assembly, (Microbial infection) May interact with the MA protein of HIV-1. In terms of processing, methylated. Binding to histone H1 'Lys-26' promotes mono-, di-, and trimethylation of internal lysines. As to expression, expressed in brain, colon, heart, kidney, liver, lung, muscle, ovary, peripheral blood leukocytes, pancreas, placenta, prostate, spleen, small intestine, testis, thymus and uterus. Appears to be overexpressed in breast and colon cancer.

It is found in the nucleus. Its subcellular location is the chromosome. Functionally, polycomb group (PcG) protein. Component of the PRC2/EED-EZH2 complex, which methylates 'Lys-9' and 'Lys-27' of histone H3, leading to transcriptional repression of the affected target gene. Also recognizes 'Lys-26' trimethylated histone H1 with the effect of inhibiting PRC2 complex methyltransferase activity on nucleosomal histone H3 'Lys-27', whereas H3 'Lys-27' recognition has the opposite effect, enabling the propagation of this repressive mark. The PRC2/EED-EZH2 complex may also serve as a recruiting platform for DNA methyltransferases, thereby linking two epigenetic repression systems. Genes repressed by the PRC2/EED-EZH2 complex include HOXC8, HOXA9, MYT1 and CDKN2A. The polypeptide is Polycomb protein EED (Homo sapiens (Human)).